The primary structure comprises 336 residues: Filaggrin (336 aa).

A disordered region spans residues 1-313; sequence PDGSGRSSNR…GVQGAAASGQ (313 aa). Low complexity-rich tracts occupy residues 16-26, 40-66, and 73-98; these read QLSPSQSSDSQ, SSSANRRAGSSSGSGVQGASAGGLAAD, and ARQGQASAQGRAGSQGQAQGRVSSSA. 3 stretches are compositionally biased toward basic and acidic residues: residues 100–120, 163–176, and 184–195; these read RQGRRGVSESRASDSEGHSDF, DSQHQHGHQHEQQR, and HQHEHEQPESGH. Positions 285-311 are enriched in low complexity; that stretch reads AQRGQSSSANRRAGSSSGSGVQGAAAS.

Belongs to the S100-fused protein family. Post-translationally, filaggrin is initially synthesized as a large, insoluble, highly phosphorylated precursor containing many tandem copies of 248 AA, which are not separated by large linker sequences. During terminal differentiation it is dephosphorylated and proteolytically cleaved. Expressed in the granular layer of the epidermis (at protein level). Expressed in the epidermis of the ear (at protein level).

It is found in the cytoplasmic granule. Functionally, aggregates keratin intermediate filaments and promotes disulfide-bond formation among the intermediate filaments during terminal differentiation of mammalian epidermis. In Mus musculus (Mouse), this protein is Filaggrin (Flg).